Here is a 264-residue protein sequence, read N- to C-terminus: Thymidylate synthase (264 aa).

Arg-21 contributes to the dUMP binding site. His-51 is a (6R)-5,10-methylene-5,6,7,8-tetrahydrofolate binding site. Residue 126-127 coordinates dUMP; sequence RR. Cys-146 (nucleophile) is an active-site residue. Residues 166 to 169, Asn-177, and 207 to 209 each bind dUMP; these read RSAD and HIY. Asp-169 contacts (6R)-5,10-methylene-5,6,7,8-tetrahydrofolate. Position 263 (Ala-263) interacts with (6R)-5,10-methylene-5,6,7,8-tetrahydrofolate.

Belongs to the thymidylate synthase family. Bacterial-type ThyA subfamily. As to quaternary structure, homodimer.

It localises to the cytoplasm. The catalysed reaction is dUMP + (6R)-5,10-methylene-5,6,7,8-tetrahydrofolate = 7,8-dihydrofolate + dTMP. Its pathway is pyrimidine metabolism; dTTP biosynthesis. In terms of biological role, catalyzes the reductive methylation of 2'-deoxyuridine-5'-monophosphate (dUMP) to 2'-deoxythymidine-5'-monophosphate (dTMP) while utilizing 5,10-methylenetetrahydrofolate (mTHF) as the methyl donor and reductant in the reaction, yielding dihydrofolate (DHF) as a by-product. This enzymatic reaction provides an intracellular de novo source of dTMP, an essential precursor for DNA biosynthesis. This chain is Thymidylate synthase, found in Parabacteroides distasonis (strain ATCC 8503 / DSM 20701 / CIP 104284 / JCM 5825 / NCTC 11152).